The chain runs to 738 residues: 1,4-alpha-glucan branching enzyme GlgB (738 aa).

D399 serves as the catalytic Nucleophile. Residue E452 is the Proton donor of the active site.

The protein belongs to the glycosyl hydrolase 13 family. GlgB subfamily. Monomer.

The enzyme catalyses Transfers a segment of a (1-&gt;4)-alpha-D-glucan chain to a primary hydroxy group in a similar glucan chain.. The protein operates within glycan biosynthesis; glycogen biosynthesis. Its function is as follows. Catalyzes the formation of the alpha-1,6-glucosidic linkages in glycogen by scission of a 1,4-alpha-linked oligosaccharide from growing alpha-1,4-glucan chains and the subsequent attachment of the oligosaccharide to the alpha-1,6 position. The polypeptide is 1,4-alpha-glucan branching enzyme GlgB (Chlamydia trachomatis serovar L2b (strain UCH-1/proctitis)).